The following is an 848-amino-acid chain: Heat shock protein 70 homolog lhs1 (848 aa).

The first 21 residues, 1–21, serve as a signal peptide directing secretion; sequence MKRSVLTIILFFSCQFWHAFA. N-linked (GlcNAc...) asparagine glycosylation is found at Asn-134, Asn-247, Asn-359, Asn-457, Asn-462, Asn-488, Asn-555, Asn-632, Asn-678, Asn-733, and Asn-817. The interval 784–848 is disordered; that stretch reads KLKAKKGASS…QQEIDDSDEL (65 aa). Polar residues-rich tracts occupy residues 807–822 and 829–840; these read TNDI…TSTQ and ASVTQRPSSLQQ. The short motif at 845-848 is the Prevents secretion from ER element; it reads SDEL.

It belongs to the heat shock protein 70 family.

It is found in the endoplasmic reticulum lumen. It carries out the reaction ATP + H2O = ADP + phosphate + H(+). Chaperone required for protein translocation and folding in the endoplasmic reticulum. This chain is Heat shock protein 70 homolog lhs1, found in Schizosaccharomyces pombe (strain 972 / ATCC 24843) (Fission yeast).